The sequence spans 88 residues: MTTANTTAKDNAATKKRGRKAKKRVCAFCTDNIDKIDYKDVARLRKYITERGKILPRRITGNCARHQRQLTKAIKRARQIALLPYTVE.

Low complexity predominate over residues 1-11 (MTTANTTAKDN). The disordered stretch occupies residues 1–21 (MTTANTTAKDNAATKKRGRKA).

Belongs to the bacterial ribosomal protein bS18 family. In terms of assembly, part of the 30S ribosomal subunit. Forms a tight heterodimer with protein bS6.

Binds as a heterodimer with protein bS6 to the central domain of the 16S rRNA, where it helps stabilize the platform of the 30S subunit. The chain is Small ribosomal subunit protein bS18 from Thermoanaerobacter pseudethanolicus (strain ATCC 33223 / 39E) (Clostridium thermohydrosulfuricum).